Here is a 273-residue protein sequence, read N- to C-terminus: Putative phosphoenolpyruvate synthase regulatory protein (273 aa).

Residue 153 to 160 (GVSRCGKT) participates in ADP binding.

The protein belongs to the pyruvate, phosphate/water dikinase regulatory protein family. PSRP subfamily.

It catalyses the reaction [pyruvate, water dikinase] + ADP = [pyruvate, water dikinase]-phosphate + AMP + H(+). The catalysed reaction is [pyruvate, water dikinase]-phosphate + phosphate + H(+) = [pyruvate, water dikinase] + diphosphate. Its function is as follows. Bifunctional serine/threonine kinase and phosphorylase involved in the regulation of the phosphoenolpyruvate synthase (PEPS) by catalyzing its phosphorylation/dephosphorylation. This is Putative phosphoenolpyruvate synthase regulatory protein from Yersinia enterocolitica serotype O:8 / biotype 1B (strain NCTC 13174 / 8081).